The chain runs to 260 residues: NAD-capped RNA hydrolase NudC (260 aa).

Arg74 is a binding site for substrate. Residues Cys103, Cys106, Cys121, and Cys124 each contribute to the Zn(2+) site. Tyr129 is a binding site for substrate. One can recognise a Nudix hydrolase domain in the interval 130-253; the sequence is PRIFPCIIVA…TIARALIEQT (124 aa). 3 residues coordinate a divalent metal cation: Ala163, Glu179, and Glu183. The Nudix box signature appears at 164–185; that stretch reads GFLEAGETLEDCVAREVHEETG. 197–204 contacts substrate; that stretch reads QPWAFPSS. Glu224 serves as a coordination point for a divalent metal cation. Ala246 contributes to the substrate binding site.

It belongs to the Nudix hydrolase family. NudC subfamily. As to quaternary structure, homodimer. Requires Mg(2+) as cofactor. Mn(2+) serves as cofactor. Zn(2+) is required as a cofactor.

It carries out the reaction a 5'-end NAD(+)-phospho-ribonucleoside in mRNA + H2O = a 5'-end phospho-adenosine-phospho-ribonucleoside in mRNA + beta-nicotinamide D-ribonucleotide + 2 H(+). It catalyses the reaction NAD(+) + H2O = beta-nicotinamide D-ribonucleotide + AMP + 2 H(+). The enzyme catalyses NADH + H2O = reduced beta-nicotinamide D-ribonucleotide + AMP + 2 H(+). Functionally, mRNA decapping enzyme that specifically removes the nicotinamide adenine dinucleotide (NAD) cap from a subset of mRNAs by hydrolyzing the diphosphate linkage to produce nicotinamide mononucleotide (NMN) and 5' monophosphate mRNA. The NAD-cap is present at the 5'-end of some mRNAs and stabilizes RNA against 5'-processing. Has preference for mRNAs with a 5'-end purine. Catalyzes the hydrolysis of a broad range of dinucleotide pyrophosphates. The sequence is that of NAD-capped RNA hydrolase NudC from Vibrio parahaemolyticus serotype O3:K6 (strain RIMD 2210633).